The sequence spans 338 residues: Tetraacyldisaccharide 4'-kinase (338 aa).

51-58 (HLGGAGKT) lines the ATP pocket.

The protein belongs to the LpxK family.

It catalyses the reaction a lipid A disaccharide + ATP = a lipid IVA + ADP + H(+). Its pathway is glycolipid biosynthesis; lipid IV(A) biosynthesis; lipid IV(A) from (3R)-3-hydroxytetradecanoyl-[acyl-carrier-protein] and UDP-N-acetyl-alpha-D-glucosamine: step 6/6. Its function is as follows. Transfers the gamma-phosphate of ATP to the 4'-position of a tetraacyldisaccharide 1-phosphate intermediate (termed DS-1-P) to form tetraacyldisaccharide 1,4'-bis-phosphate (lipid IVA). In Rhodopseudomonas palustris (strain BisB5), this protein is Tetraacyldisaccharide 4'-kinase.